The chain runs to 336 residues: Glycerol-3-phosphate dehydrogenase [NAD(P)+] (336 aa).

NADPH contacts are provided by Trp-16 and Lys-109. Residues Lys-109, Gly-137, and Ser-139 each coordinate sn-glycerol 3-phosphate. Ala-141 contributes to the NADPH binding site. Residues Lys-192, Asp-245, Ser-255, Arg-256, and Asn-257 each coordinate sn-glycerol 3-phosphate. Lys-192 functions as the Proton acceptor in the catalytic mechanism. NADPH is bound at residue Arg-256. NADPH is bound by residues Val-280 and Glu-282.

It belongs to the NAD-dependent glycerol-3-phosphate dehydrogenase family.

The protein resides in the cytoplasm. The catalysed reaction is sn-glycerol 3-phosphate + NAD(+) = dihydroxyacetone phosphate + NADH + H(+). It carries out the reaction sn-glycerol 3-phosphate + NADP(+) = dihydroxyacetone phosphate + NADPH + H(+). It functions in the pathway membrane lipid metabolism; glycerophospholipid metabolism. Functionally, catalyzes the reduction of the glycolytic intermediate dihydroxyacetone phosphate (DHAP) to sn-glycerol 3-phosphate (G3P), the key precursor for phospholipid synthesis. This is Glycerol-3-phosphate dehydrogenase [NAD(P)+] from Hyphomonas neptunium (strain ATCC 15444).